Here is a 140-residue protein sequence, read N- to C-terminus: Neurotrophin-7 (140 aa).

A propeptide spanning residues 1 to 7 (PGPRVRR) is cleaved from the precursor. 3 disulfide bridges follow: Cys-21–Cys-101, Cys-64–Cys-129, and Cys-89–Cys-131.

Belongs to the NGF-beta family.

The protein resides in the secreted. This is Neurotrophin-7 (ntf7) from Cyprinus carpio (Common carp).